A 247-amino-acid polypeptide reads, in one-letter code: Translation initiation factor IF-3 (247 aa).

Disordered regions lie at residues 1-20 and 188-247; these read MIRE…TNRR and LVRQ…PTAS. Residues 182–247 are needed for vegetative and developmental functions, but not for viability; the sequence is AQKARELVRQ…AAEAQSPTAS (66 aa). Residues 207–217 show a composition bias toward low complexity; it reads AGKSAAGASSG. Over residues 218-232 the composition is skewed to basic and acidic residues; the sequence is AEEKAEETAEEKKEA. Residues 233–247 are compositionally biased toward low complexity; sequence QAAPAAAEAQSPTAS.

It belongs to the IF-3 family. In terms of assembly, monomer.

It is found in the cytoplasm. In terms of biological role, IF-3 binds to the 30S ribosomal subunit and shifts the equilibrium between 70S ribosomes and their 50S and 30S subunits in favor of the free subunits, thus enhancing the availability of 30S subunits on which protein synthesis initiation begins. This chain is Translation initiation factor IF-3, found in Myxococcus xanthus.